A 290-amino-acid chain; its full sequence is 4-diphosphocytidyl-2-C-methyl-D-erythritol kinase (290 aa).

Residue lysine 14 is part of the active site. Residue 103–113 (PMGGGLGGGSS) coordinates ATP. Aspartate 145 is a catalytic residue.

It belongs to the GHMP kinase family. IspE subfamily. As to quaternary structure, homodimer.

It carries out the reaction 4-CDP-2-C-methyl-D-erythritol + ATP = 4-CDP-2-C-methyl-D-erythritol 2-phosphate + ADP + H(+). Its pathway is isoprenoid biosynthesis; isopentenyl diphosphate biosynthesis via DXP pathway; isopentenyl diphosphate from 1-deoxy-D-xylulose 5-phosphate: step 3/6. Catalyzes the phosphorylation of the position 2 hydroxy group of 4-diphosphocytidyl-2C-methyl-D-erythritol. The protein is 4-diphosphocytidyl-2-C-methyl-D-erythritol kinase of Pectobacterium atrosepticum (strain SCRI 1043 / ATCC BAA-672) (Erwinia carotovora subsp. atroseptica).